Here is a 356-residue protein sequence, read N- to C-terminus: Chorismate synthase (356 aa).

NADP(+) is bound by residues arginine 48 and arginine 54. Residues 125–127, 237–238, glycine 281, 296–300, and arginine 322 contribute to the FMN site; these read RSS, NA, and KPTSS.

It belongs to the chorismate synthase family. As to quaternary structure, homotetramer. FMNH2 serves as cofactor.

It carries out the reaction 5-O-(1-carboxyvinyl)-3-phosphoshikimate = chorismate + phosphate. It functions in the pathway metabolic intermediate biosynthesis; chorismate biosynthesis; chorismate from D-erythrose 4-phosphate and phosphoenolpyruvate: step 7/7. Its function is as follows. Catalyzes the anti-1,4-elimination of the C-3 phosphate and the C-6 proR hydrogen from 5-enolpyruvylshikimate-3-phosphate (EPSP) to yield chorismate, which is the branch point compound that serves as the starting substrate for the three terminal pathways of aromatic amino acid biosynthesis. This reaction introduces a second double bond into the aromatic ring system. In Novosphingobium aromaticivorans (strain ATCC 700278 / DSM 12444 / CCUG 56034 / CIP 105152 / NBRC 16084 / F199), this protein is Chorismate synthase.